A 770-amino-acid polypeptide reads, in one-letter code: Elongation factor G, mitochondrial (770 aa).

Residues 1-24 constitute a mitochondrion transit peptide; that stretch reads MLKLSFRSLTSRLPRLSTLVVRGY. Residues 57–353 enclose the tr-type G domain; sequence KQIRNIGISA…AVCDYLPNPS (297 aa). Residues 66-73, 151-155, and 205-208 each bind GTP; these read AHIDSGKT, DTPGH, and NKMD.

It belongs to the TRAFAC class translation factor GTPase superfamily. Classic translation factor GTPase family. EF-G/EF-2 subfamily.

It localises to the mitochondrion. It functions in the pathway protein biosynthesis; polypeptide chain elongation. Functionally, mitochondrial GTPase that catalyzes the GTP-dependent ribosomal translocation step during translation elongation. During this step, the ribosome changes from the pre-translocational (PRE) to the post-translocational (POST) state as the newly formed A-site-bound peptidyl-tRNA and P-site-bound deacylated tRNA move to the P and E sites, respectively. Catalyzes the coordinated movement of the two tRNA molecules, the mRNA and conformational changes in the ribosome. The sequence is that of Elongation factor G, mitochondrial (mef1) from Schizosaccharomyces pombe (strain 972 / ATCC 24843) (Fission yeast).